A 115-amino-acid polypeptide reads, in one-letter code: Large ribosomal subunit protein bL20 (115 aa).

This sequence belongs to the bacterial ribosomal protein bL20 family.

Binds directly to 23S ribosomal RNA and is necessary for the in vitro assembly process of the 50S ribosomal subunit. It is not involved in the protein synthesizing functions of that subunit. The protein is Large ribosomal subunit protein bL20 of Parasynechococcus marenigrum (strain WH8102).